The chain runs to 480 residues: Glycogen synthase (480 aa).

Lys15 lines the ADP-alpha-D-glucose pocket.

The protein belongs to the glycosyltransferase 1 family. Bacterial/plant glycogen synthase subfamily.

The enzyme catalyses [(1-&gt;4)-alpha-D-glucosyl](n) + ADP-alpha-D-glucose = [(1-&gt;4)-alpha-D-glucosyl](n+1) + ADP + H(+). It functions in the pathway glycan biosynthesis; glycogen biosynthesis. Its function is as follows. Synthesizes alpha-1,4-glucan chains using ADP-glucose. The polypeptide is Glycogen synthase (Rhizobium rhizogenes (strain K84 / ATCC BAA-868) (Agrobacterium radiobacter)).